A 527-amino-acid chain; its full sequence is MSGDQGQAGAKRPIRRALISVYDKSGLIDLARGLHEAGVDIVSTGSTAKTIADKGIPVTPVEFVTGFPEVLDGRVKTLHPHIHAGLLADTRKPEHVEALAKLGIAPFDLVVVNLYPFSETVESGASVDECVEQIDIGGPSMVRAAAKNHPSVAVVVEPNGYDGVLAAVRTGGFTLAERKILASLAFRHTAEYDVAVASWMGSTLAPEEPAQKLPAWVGGTWRRAAVLRYGENPHQQAALYRDATAWPGLAQAEQLHGKEMSYNNYTDADAAWRAAFDHEEICVAIIKHANPCGIAISSVSVADAHRKAHECDPLSAFGGVIATNSSVSVEMAETVADIFTEVIVAPAYEPGAVEILSRKKNIRILLAAQPPTTGTELRPISGGLLLQQRDALDADGDDPVNWTLATGEPADPATLANLKFAWRSCRAVKSNAIVVVADGATVGVGMGQVNRVDAARLAVQRAGDRVRGAIAASDAFFPFPDGLETLTEAGVKAIVHPGGSMRDDVVTEAAAKAGISLYLTGARHFAH.

Positions 8–156 (AGAKRPIRRA…KNHPSVAVVV (149 aa)) constitute an MGS-like domain.

Belongs to the PurH family.

The enzyme catalyses (6R)-10-formyltetrahydrofolate + 5-amino-1-(5-phospho-beta-D-ribosyl)imidazole-4-carboxamide = 5-formamido-1-(5-phospho-D-ribosyl)imidazole-4-carboxamide + (6S)-5,6,7,8-tetrahydrofolate. The catalysed reaction is IMP + H2O = 5-formamido-1-(5-phospho-D-ribosyl)imidazole-4-carboxamide. The protein operates within purine metabolism; IMP biosynthesis via de novo pathway; 5-formamido-1-(5-phospho-D-ribosyl)imidazole-4-carboxamide from 5-amino-1-(5-phospho-D-ribosyl)imidazole-4-carboxamide (10-formyl THF route): step 1/1. It participates in purine metabolism; IMP biosynthesis via de novo pathway; IMP from 5-formamido-1-(5-phospho-D-ribosyl)imidazole-4-carboxamide: step 1/1. This is Bifunctional purine biosynthesis protein PurH from Mycobacterium sp. (strain JLS).